The sequence spans 151 residues: Putative pre-16S rRNA nuclease (151 aa).

This sequence belongs to the YqgF nuclease family.

It localises to the cytoplasm. Functionally, could be a nuclease involved in processing of the 5'-end of pre-16S rRNA. This chain is Putative pre-16S rRNA nuclease, found in Myxococcus xanthus (strain DK1622).